A 148-amino-acid chain; its full sequence is Deoxyuridine 5'-triphosphate nucleotidohydrolase (148 aa).

Substrate-binding positions include 67–69 (RSG), N80, 84–86 (LID), and M94.

It belongs to the dUTPase family. Mg(2+) is required as a cofactor.

The enzyme catalyses dUTP + H2O = dUMP + diphosphate + H(+). It participates in pyrimidine metabolism; dUMP biosynthesis; dUMP from dCTP (dUTP route): step 2/2. Its function is as follows. This enzyme is involved in nucleotide metabolism: it produces dUMP, the immediate precursor of thymidine nucleotides and it decreases the intracellular concentration of dUTP so that uracil cannot be incorporated into DNA. This Francisella tularensis subsp. tularensis (strain FSC 198) protein is Deoxyuridine 5'-triphosphate nucleotidohydrolase.